A 608-amino-acid chain; its full sequence is Albumin (608 aa).

The N-terminal stretch at 1-18 (MKWVTFISLLFLFSSAYS) is a signal peptide. Residues 19-24 (RGVFRR) constitute a propeptide that is removed on maturation. 3 Albumin domains span residues 19 to 210 (RGVF…DALE), 211 to 403 (GKSL…EFQP), and 404 to 601 (LVDE…KLVE). A Cu cation-binding site is contributed by histidine 27. Serine 29 carries the post-translational modification Phosphoserine. Residues glutamate 30 and aspartate 37 each contribute to the Ca(2+) site. The cysteines at positions 77 and 86 are disulfide-linked. Phosphoserine occurs at positions 82 and 89. Zn(2+) is bound at residue histidine 91. Intrachain disulfides connect cysteine 99-cysteine 115, cysteine 114-cysteine 125, cysteine 148-cysteine 193, cysteine 192-cysteine 201, cysteine 224-cysteine 270, and cysteine 269-cysteine 277. Threonine 107 bears the Phosphothreonine mark. Lysine 229 carries the N6-succinyllysine modification. Residue glutamate 268 participates in Ca(2+) binding. Zn(2+)-binding residues include histidine 271 and aspartate 273. Positions 273, 276, 279, and 283 each coordinate Ca(2+). 8 disulfides stabilise this stretch: cysteine 289–cysteine 303, cysteine 302–cysteine 313, cysteine 340–cysteine 385, cysteine 384–cysteine 393, cysteine 416–cysteine 462, cysteine 461–cysteine 472, cysteine 485–cysteine 501, and cysteine 500–cysteine 511. At serine 297 the chain carries Phosphoserine. A Phosphoserine modification is found at serine 443. 2 positions are modified to phosphothreonine: threonine 444 and threonine 446. Lysine 460 bears the N6-succinyllysine mark. Serine 513 is modified (phosphoserine). 2 cysteine pairs are disulfide-bonded: cysteine 538–cysteine 583 and cysteine 582–cysteine 591. Lysine 558 is subject to N6-methyllysine. Threonine 570 carries the phosphothreonine modification. Position 588 is an N6-succinyllysine (lysine 588).

This sequence belongs to the ALB/AFP/VDB family. In terms of assembly, interacts with FCGRT; this interaction regulates ALB homeostasis. Interacts with TASOR. In plasma, occurs in a covalently-linked complex with chromophore-bound alpha-1-microglobulin; this interaction does not prevent fatty acid binding to ALB. Phosphorylated by FAM20C in the extracellular medium. In terms of tissue distribution, plasma.

It is found in the secreted. Its function is as follows. Binds water, Ca(2+), Na(+), K(+), fatty acids, hormones, bilirubin and drugs. Its main function is the regulation of the colloidal osmotic pressure of blood. Major zinc transporter in plasma, typically binds about 80% of all plasma zinc. Major calcium and magnesium transporter in plasma, binds approximately 45% of circulating calcium and magnesium in plasma. Potentially has more than two calcium-binding sites and might additionally bind calcium in a non-specific manner. The shared binding site between zinc and calcium at residue Asp-273 suggests a crosstalk between zinc and calcium transport in the blood. The rank order of affinity is zinc &gt; calcium &gt; magnesium. Binds to the bacterial siderophore enterobactin and inhibits enterobactin-mediated iron uptake of E.coli from ferric transferrin, and may thereby limit the utilization of iron and growth of enteric bacteria such as E.coli. Does not prevent iron uptake by the bacterial siderophore aerobactin. The chain is Albumin (ALB) from Oryctolagus cuniculus (Rabbit).